Reading from the N-terminus, the 86-residue chain is DNA-directed RNA polymerase subunit omega (86 aa).

Belongs to the RNA polymerase subunit omega family. As to quaternary structure, the RNAP catalytic core consists of 2 alpha, 1 beta, 1 beta' and 1 omega subunit. When a sigma factor is associated with the core the holoenzyme is formed, which can initiate transcription.

The enzyme catalyses RNA(n) + a ribonucleoside 5'-triphosphate = RNA(n+1) + diphosphate. Functionally, promotes RNA polymerase assembly. Latches the N- and C-terminal regions of the beta' subunit thereby facilitating its interaction with the beta and alpha subunits. In Psychrobacter sp. (strain PRwf-1), this protein is DNA-directed RNA polymerase subunit omega.